The chain runs to 105 residues: Urease subunit gamma (105 aa).

Belongs to the urease gamma subunit family. In terms of assembly, heterotrimer of UreA (gamma), UreB (beta) and UreC (alpha) subunits. Three heterotrimers associate to form the active enzyme.

Its subcellular location is the cytoplasm. It carries out the reaction urea + 2 H2O + H(+) = hydrogencarbonate + 2 NH4(+). The protein operates within nitrogen metabolism; urea degradation; CO(2) and NH(3) from urea (urease route): step 1/1. The polypeptide is Urease subunit gamma (Bacillus subtilis (strain 168)).